A 217-amino-acid polypeptide reads, in one-letter code: MEQLSCKHRSSSVEAEAQLCRQTESRSTQLPRMSVMRHLFLLSITFLVYTLDSAKAYRATETLCGGELVDTLQFVCGDRGFYFSTNNGRSNRRPNRGIVDVCCFKSCDLELLETYCAKPTKNERDVSTAPATAIPPLSKQDLYHKHHHTKSSKYDIWQRKSIHRLRRGVPAIVRARQYRLLMEKAEEAEQALSHRPLTTLPITRPLRLQQASEPSHN.

Positions 1-56 are cleaved as a signal peptide; the sequence is MEQLSCKHRSSSVEAEAQLCRQTESRSTQLPRMSVMRHLFLLSITFLVYTLDSAKA. Residues 57 to 83 are b; that stretch reads YRATETLCGGELVDTLQFVCGDRGFYF. Intrachain disulfides connect C64–C103, C76–C116, and C102–C107. The interval 84-96 is c; that stretch reads STNNGRSNRRPNR. The segment at 97 to 117 is a; that stretch reads GIVDVCCFKSCDLELLETYCA. The d stretch occupies residues 118 to 123; sequence KPTKNE. A propeptide spans 124–217 (e peptide); the sequence is RDVSTAPATA…LQQASEPSHN (94 aa).

The protein belongs to the insulin family.

It is found in the secreted. Functionally, the insulin-like growth factors, isolated from plasma, are structurally and functionally related to insulin but have a much higher growth-promoting activity. Promotes anterior neural development. Acts as a ligand for integrin which is required for IGF2 signaling. This Xenopus laevis (African clawed frog) protein is Insulin-like growth factor 2.S.